The primary structure comprises 350 residues: Anthranilate phosphoribosyltransferase (350 aa).

5-phospho-alpha-D-ribose 1-diphosphate is bound by residues Gly94, 97-98 (GD), Thr102, 104-107 (NIST), 122-130 (KHGNRSVSS), and Ser134. Gly94 serves as a coordination point for anthranilate. Position 106 (Ser106) interacts with Mg(2+). Position 125 (Asn125) interacts with anthranilate. Arg180 contributes to the anthranilate binding site. Asp239 and Glu240 together coordinate Mg(2+).

Belongs to the anthranilate phosphoribosyltransferase family. As to quaternary structure, homodimer. Requires Mg(2+) as cofactor.

It catalyses the reaction N-(5-phospho-beta-D-ribosyl)anthranilate + diphosphate = 5-phospho-alpha-D-ribose 1-diphosphate + anthranilate. The protein operates within amino-acid biosynthesis; L-tryptophan biosynthesis; L-tryptophan from chorismate: step 2/5. Functionally, catalyzes the transfer of the phosphoribosyl group of 5-phosphorylribose-1-pyrophosphate (PRPP) to anthranilate to yield N-(5'-phosphoribosyl)-anthranilate (PRA). The sequence is that of Anthranilate phosphoribosyltransferase from Geotalea daltonii (strain DSM 22248 / JCM 15807 / FRC-32) (Geobacter daltonii).